The following is a 639-amino-acid chain: Chaperone protein HtpG (639 aa).

Residues 1 to 343 (MEATATKEHL…SNDLPLNVSR (343 aa)) are a; substrate-binding. Positions 344-564 (EILQESKDIE…THDMSGNLER (221 aa)) are b. Residues 565–639 (LLKSAGQKVT…QLFLSTGSKE (75 aa)) are c.

It belongs to the heat shock protein 90 family. As to quaternary structure, homodimer.

It localises to the cytoplasm. In terms of biological role, molecular chaperone. Has ATPase activity. In Nitrosospira multiformis (strain ATCC 25196 / NCIMB 11849 / C 71), this protein is Chaperone protein HtpG.